Here is a 315-residue protein sequence, read N- to C-terminus: MTRLPILLLLISLVYATPFPQTSKKIGDDATLSCNRNNTNDYVVMSAWYKEPNSIILLAAKSDVLYFDNYTKDKISYDSPYDDLVTTITIKSLTARDAGTYVCAFFMTSPTNDTDKVDYEEYSTELIVNTDSESTIDIILSGSTHSPETSSEKPDYIDNSNCSSVFEIATPEPITDNVEDHTDTVTYTSDSINTVSASSGESTTDETPEPITDKEEDHTVTDTVSYTTVSTSSGIVTTKSTTDDADLYDTYNDNDTVPSTTVGGSTTSISNYKTKDFVEIFGITALIILSAVAIFCITYYIYNKRSRKYKTENKV.

The signal sequence occupies residues 1-16 (MTRLPILLLLISLVYA). The 105-residue stretch at 17–121 (TPFPQTSKKI…NDTDKVDYEE (105 aa)) folds into the Ig-like V-type domain. The Virion surface segment spans residues 17–279 (TPFPQTSKKI…SNYKTKDFVE (263 aa)). The cysteines at positions 34 and 103 are disulfide-linked. 4 N-linked (GlcNAc...) asparagine; by host glycosylation sites follow: N37, N69, N112, and N161. Polar residues predominate over residues 191 to 202 (SINTVSASSGES). Positions 191–213 (SINTVSASSGESTTDETPEPITD) are disordered. Residue N254 is glycosylated (N-linked (GlcNAc...) asparagine; by host). Residues 280–303 (IFGITALIILSAVAIFCITYYIYN) form a helical membrane-spanning segment. The Intravirion portion of the chain corresponds to 304 to 315 (KRSRKYKTENKV).

Belongs to the orthopoxvirus OPG185 family. In terms of assembly, heterodimerizes with OPG040. The heterodimer OPG185-OPG040 interacts with components of the entry fusion complex OPG143 and OPG094. Heterodimer with C3/VPC protein; disulfide-linked. Post-translationally, glycosylated; contains phosphate and sulfate-substituted glycans. O-glycosylation is required for hemagglutination and hemadsorption activities of infected cell membranes.

The protein resides in the virion membrane. It is found in the host membrane. Functionally, prevents cell to cell fusion by interacting with and directing the viral OPG040 protein on the host plasma membrane. The OPG185-OPG040 complex associates with components of the entry fusion complex (EFC) presumably to avoid superinfection and syncytium formation. Via its interaction with C3/VCP protein, protects the infected cell and probably also the extracellular enveloped virus from complement attack. This chain is Protein OPG185 (OPG185), found in Homo sapiens (Human).